Reading from the N-terminus, the 80-residue chain is Defensin-like protein 51 (80 aa).

The signal sequence occupies residues 1 to 27 (MGFTKILVTFFLVGLLVISSSPQNAIA). 4 disulfide bridges follow: cysteine 39/cysteine 79, cysteine 43/cysteine 66, cysteine 52/cysteine 77, and cysteine 56/cysteine 78.

Belongs to the DEFL family.

It localises to the secreted. In Arabidopsis thaliana (Mouse-ear cress), this protein is Defensin-like protein 51 (LCR48).